Reading from the N-terminus, the 654-residue chain is Fimbrin-2 (654 aa).

Calponin-homology (CH) domains are found at residues 124–241 (DSEK…KIQL), 269–372 (LPPE…QHRN), 394–500 (SREE…RYNI), and 515–623 (EITD…YWTL). Actin-binding stretches follow at residues 124–372 (DSEK…QHRN) and 394–623 (SREE…YWTL).

In terms of assembly, interacts with F-actin.

It is found in the cytoplasm. Its subcellular location is the cytoskeleton. Functionally, cross-links actin filaments (F-actin). Stabilizes and prevents F-actin depolymerization mediated by profilin. May regulate actin cytoarchitecture, cell cycle, cell division, cell elongation and cytoplasmic tractus. The sequence is that of Fimbrin-2 from Arabidopsis thaliana (Mouse-ear cress).